Reading from the N-terminus, the 162-residue chain is MRNITNFLKTFLLWELLKGLKVTGKHFFTRKVTVQYPDEKTPISNRFRGLHALRRYENGEERCIACKLCEVVCPALAITINSTEREDGTRRTSSYEIDLFKCIFCGYCEESCPVDSIVETNILEYHFEERGENIMTKAKLLAIGDKYEAQIAADRLQDKDFR.

4Fe-4S ferredoxin-type domains follow at residues 54 to 83 and 93 to 122; these read RRYE…INST and SSYE…ETNI. Positions 63, 66, 69, 73, 102, 105, 108, and 112 each coordinate [4Fe-4S] cluster.

This sequence belongs to the complex I 23 kDa subunit family. As to quaternary structure, NDH-1 is composed of 14 different subunits. Subunits NuoA, H, J, K, L, M, N constitute the membrane sector of the complex. [4Fe-4S] cluster serves as cofactor.

The protein localises to the cell inner membrane. It carries out the reaction a quinone + NADH + 5 H(+)(in) = a quinol + NAD(+) + 4 H(+)(out). In terms of biological role, NDH-1 shuttles electrons from NADH, via FMN and iron-sulfur (Fe-S) centers, to quinones in the respiratory chain. The immediate electron acceptor for the enzyme in this species is believed to be ubiquinone. Couples the redox reaction to proton translocation (for every two electrons transferred, four hydrogen ions are translocated across the cytoplasmic membrane), and thus conserves the redox energy in a proton gradient. The sequence is that of NADH-quinone oxidoreductase subunit I from Francisella tularensis subsp. holarctica (strain FTNF002-00 / FTA).